The following is a 357-amino-acid chain: MAEKESNGVRVCVTGGAGFIGSWLVRKLLEKGYTVHATLRNTGDEAKAGLLRRLVPGAAERLRLFQADLFDAATFAPAIAGCQFVFLVATPFGLDSAGSQYKSTAEAVVDAVHAILRQCEESRTVKRVIHTASVAAASPLLEEEVPASGVGYRDFIDESCWTSLNVDYPLRSAHFDKYILSKLQSEQELLSYNNGESPAFEVVTLPLGLVAGDTVLGRAPETVESAVAPVSRSEPYFGLLRILQQLLGSLPLVHVDDVCDALVFCMERRPSVAGRFLCAAAYPTIHDVVAHYASKFPHLDILKETTEAVATVRPARDRLGELGFKYKYGMEEILDSSVACAARLGSLDASKLGLQKG.

NADP(+)-binding positions include R40, K47, 68–69, 88–90, Y178, K182, 207–210, and T222; these read DL, VAT, and LGLV. K182 acts as the Proton donor in catalysis.

Belongs to the NAD(P)-dependent epimerase/dehydratase family.

Its activity is regulated as follows. Activity is sensitive to heat, dependent on NADPH, and inhibited by p-hydroxymercuribenzoate and disulfiram. In tandem with Hm2, NADPH-dependent Helminthosporium carbonum (HC) toxin reductase (HCTR), which inactivates HC toxin, a cyclic tetrapeptide produced by the fungus Cochliobolus carbonum to permit infection and acting as an inhibitor of host histone deacetylases (HDACs), thus conferring resistance against C.carbonum race 1 in resistant cultivars (e.g. cv. B73 and cv. Wisconsin 22). Catalyzes the production of 8-hydroxy derivative of HC-toxin via the reduction of the 8-keto group of 2-amino-9,10-epoxy-8-oxo-decanoic acid, an amino acid of the HC-toxin. The chain is NADPH HC-toxin reductase 1 from Zea mays (Maize).